Consider the following 342-residue polypeptide: Ribosomal RNA small subunit methyltransferase C (342 aa).

This sequence belongs to the methyltransferase superfamily. RsmC family. As to quaternary structure, monomer.

The protein localises to the cytoplasm. The enzyme catalyses guanosine(1207) in 16S rRNA + S-adenosyl-L-methionine = N(2)-methylguanosine(1207) in 16S rRNA + S-adenosyl-L-homocysteine + H(+). Its function is as follows. Specifically methylates the guanine in position 1207 of 16S rRNA in the 30S particle. In Salmonella choleraesuis (strain SC-B67), this protein is Ribosomal RNA small subunit methyltransferase C.